We begin with the raw amino-acid sequence, 385 residues long: Probable alginate O-acetylase AlgJ (385 aa).

A signal peptide spans 1–21 (MTRTLRITYSLSFLGLLVGMG). Aspartate 190 is a catalytic residue. Histidine 192 (proton acceptor) is an active-site residue. The active-site Nucleophile is the serine 288.

Belongs to the AlgJ family.

It is found in the cell inner membrane. It localises to the periplasm. The protein operates within glycan biosynthesis; alginate biosynthesis. Its function is as follows. Together with AlgI and AlgF, forms an inner membrane complex which probably interacts with the alginate polymerization-transport complex and adds acetyl groups at the O-2 and O-3 positions of mannuronate residues. Acetylation of alginate is important for the architecture of biofilms and increases the ability of alginate to act as a defense barrier. This chain is Probable alginate O-acetylase AlgJ (algJ), found in Pseudomonas putida (strain ATCC 47054 / DSM 6125 / CFBP 8728 / NCIMB 11950 / KT2440).